The primary structure comprises 482 residues: MSELIFEKSVKGHKFAEAKLTVPEYKLDSKYLRASDAKLPEVSELEFVRHYMELSKRTHGVDNGFYPLGSCTMKYNPKLNEEVADLPNFTNIHPLQPEHTMKGCIEAMGDLGKKLGEITGMDAFSLQPSAGAHGEFTALLVIRAYHEKRGDHARNKILVPDSAHGTNPASAAMVGCEIVNIPSDKDGNVDIEELKKTVGNDTAALMLTNPNTLGLFETHIKEIAEIVHKAGGLLYYDGANLNAIMGRLRPGDMGYDIVHLNLHKTFSTPHGGGGPGSGPIGCKKFLEEFLPVPVVTGSDGSYKLDYNRPDSIGRVRNFYGNFLVFLRAYAYILTLGSEGIRESSGYAVLNANYLKKKLEKEYDVAFDRICMHEFVLTLEKIKEETGVSALDIAKGLIDDGIHPPTMYFPLIVHEALMFEPTETESKSTLDFTAEVMIKLKKEAYSNPEKLHGYPYTRPIGRVDETKAAREPVLRYKACCCCK.

N6-(pyridoxal phosphate)lysine is present on K264.

This sequence belongs to the GcvP family. C-terminal subunit subfamily. As to quaternary structure, the glycine cleavage system is composed of four proteins: P, T, L and H. In this organism, the P 'protein' is a heterodimer of two subunits. It depends on pyridoxal 5'-phosphate as a cofactor.

The catalysed reaction is N(6)-[(R)-lipoyl]-L-lysyl-[glycine-cleavage complex H protein] + glycine + H(+) = N(6)-[(R)-S(8)-aminomethyldihydrolipoyl]-L-lysyl-[glycine-cleavage complex H protein] + CO2. In terms of biological role, the glycine cleavage system catalyzes the degradation of glycine. The P protein binds the alpha-amino group of glycine through its pyridoxal phosphate cofactor; CO(2) is released and the remaining methylamine moiety is then transferred to the lipoamide cofactor of the H protein. In Treponema denticola (strain ATCC 35405 / DSM 14222 / CIP 103919 / JCM 8153 / KCTC 15104), this protein is Probable glycine dehydrogenase (decarboxylating) subunit 2.